A 276-amino-acid polypeptide reads, in one-letter code: Undecaprenyl-diphosphatase 2 (276 aa).

Transmembrane regions (helical) follow at residues 1 to 21 (MSLW…LFPV), 44 to 64 (QLLP…LWYF), 87 to 107 (GHLM…GLLL), 114 to 134 (VFHD…LLWL), 150 to 170 (LTFK…IPGF), 190 to 210 (AAEF…LLEL), 222 to 242 (DALL…RFLM), and 251 to 271 (LASF…WFMF).

This sequence belongs to the UppP family.

Its subcellular location is the cell inner membrane. The catalysed reaction is di-trans,octa-cis-undecaprenyl diphosphate + H2O = di-trans,octa-cis-undecaprenyl phosphate + phosphate + H(+). Functionally, catalyzes the dephosphorylation of undecaprenyl diphosphate (UPP). Confers resistance to bacitracin. The protein is Undecaprenyl-diphosphatase 2 of Burkholderia thailandensis (strain ATCC 700388 / DSM 13276 / CCUG 48851 / CIP 106301 / E264).